We begin with the raw amino-acid sequence, 103 residues long: Histone H4 (103 aa).

Gly residues predominate over residues 1–14 (MSGRGKGGKGLGKG). Residues 1–20 (MSGRGKGGKGLGKGGAKRHR) form a disordered region. Residues 17 to 21 (KRHRK) mediate DNA binding.

The protein belongs to the histone H4 family. The nucleosome is a histone octamer containing two molecules each of H2A, H2B, H3 and H4 assembled in one H3-H4 heterotetramer and two H2A-H2B heterodimers. The octamer wraps approximately 147 bp of DNA.

Its subcellular location is the nucleus. The protein resides in the chromosome. Functionally, core component of nucleosome. Nucleosomes wrap and compact DNA into chromatin, limiting DNA accessibility to the cellular machineries which require DNA as a template. Histones thereby play a central role in transcription regulation, DNA repair, DNA replication and chromosomal stability. DNA accessibility is regulated via a complex set of post-translational modifications of histones, also called histone code, and nucleosome remodeling. The chain is Histone H4 (H4-I) from Volvox carteri (Green alga).